A 93-amino-acid polypeptide reads, in one-letter code: Small ribosomal subunit protein uS15 (93 aa).

Belongs to the universal ribosomal protein uS15 family. In terms of assembly, part of the 30S ribosomal subunit. Forms a bridge to the 50S subunit in the 70S ribosome, contacting the 23S rRNA.

Functionally, one of the primary rRNA binding proteins, it binds directly to 16S rRNA where it helps nucleate assembly of the platform of the 30S subunit by binding and bridging several RNA helices of the 16S rRNA. Forms an intersubunit bridge (bridge B4) with the 23S rRNA of the 50S subunit in the ribosome. The chain is Small ribosomal subunit protein uS15 from Anaplasma phagocytophilum (strain HZ).